A 459-amino-acid chain; its full sequence is MRPPSLPPARWLCVLAGALACALGPAGSRAASPHQECEYLQMIEKQRQQCLEEAQLENETTGCSKMWDNLTCWPTTPWGQVVVLDCPLIFQLFSPIHGYNISRNCTEEGWSQLEPGPYHIACGLNDRASSMDEQQQTEFYDAVKTGYTIGYSLSLASLLVAMAILSLFRKLHCTRNYIHMHLFMSFILRATAVFIKDMALFNNGETDHCSEASVSCKAAVVFFQYCVMANFFWLLVEGLYLHTLLAVSFFSERKYFWGYILIGWGVPSVFIMIWTIVRIHFEDFGCWDTIINSSLWWIIKGPILISILVNFILFICIIRILVQKLRPPDIGKNDSSPYSRLAKSTLLLIPLFGVHYVMFAFFPDNFKAQVKMVFELVVGSFQGFVVAILYCFLNGEVQAELRRKWRRWHLQGVLGWSSKSQHPWGGSNGVSCSTQVSMLTRVSPSARRSSSFQAEVSLV.

Residues 1-30 (MRPPSLPPARWLCVLAGALACALGPAGSRA) form the signal peptide. Topologically, residues 31-142 (ASPHQECEYL…EQQQTEFYDA (112 aa)) are extracellular. Intrachain disulfides connect cysteine 37-cysteine 209, cysteine 50-cysteine 72, cysteine 63-cysteine 105, cysteine 86-cysteine 122, and cysteine 216-cysteine 286. N-linked (GlcNAc...) asparagine glycans are attached at residues asparagine 58, asparagine 69, asparagine 100, and asparagine 104. Residues 143 to 167 (VKTGYTIGYSLSLASLLVAMAILSL) traverse the membrane as a helical segment. The Cytoplasmic segment spans residues 168 to 175 (FRKLHCTR). The helical transmembrane segment at 176 to 197 (NYIHMHLFMSFILRATAVFIKD) threads the bilayer. Over 198 to 217 (MALFNNGETDHCSEASVSCK) the chain is Extracellular. The chain crosses the membrane as a helical span at residues 218–242 (AAVVFFQYCVMANFFWLLVEGLYLH). Residues 243–255 (TLLAVSFFSERKY) are Cytoplasmic-facing. Residues 256–277 (FWGYILIGWGVPSVFIMIWTIV) form a helical membrane-spanning segment. Over 278 to 293 (RIHFEDFGCWDTIINS) the chain is Extracellular. Asparagine 292 is a glycosylation site (N-linked (GlcNAc...) asparagine). The chain crosses the membrane as a helical span at residues 294 to 318 (SLWWIIKGPILISILVNFILFICII). Residues 319–340 (RILVQKLRPPDIGKNDSSPYSR) are Cytoplasmic-facing. The chain crosses the membrane as a helical span at residues 341 to 361 (LAKSTLLLIPLFGVHYVMFAF). The Extracellular portion of the chain corresponds to 362-369 (FPDNFKAQ). Residues 370-393 (VKMVFELVVGSFQGFVVAILYCFL) form a helical membrane-spanning segment. The Cytoplasmic portion of the chain corresponds to 394 to 459 (NGEVQAELRR…SSFQAEVSLV (66 aa)).

This sequence belongs to the G-protein coupled receptor 2 family. As to quaternary structure, interacts with ADCYAP1/PACAP; activated by both PACAP27 and PACAP38 neuropeptides. Interacts with VIP; the interaction results in VIPR1 activation.

Its subcellular location is the cell membrane. G protein-coupled receptor activated by the neuropeptides vasoactive intestinal peptide (VIP) and pituitary adenylate cyclase-activating polypeptide (ADCYAP1/PACAP). Binds VIP and both PACAP27 and PACAP38 bioactive peptides with the following order of ligand affinity VIP = PACAP27 &gt; PACAP38. Ligand binding causes a conformation change that triggers signaling via guanine nucleotide-binding proteins (G proteins) and modulates the activity of downstream effectors. Activates cAMP-dependent pathway. This Mus musculus (Mouse) protein is Vasoactive intestinal polypeptide receptor 1.